The sequence spans 1577 residues: Dynamin-binding protein (1577 aa).

The residue at position 1 (M1) is an N-acetylmethionine. 3 consecutive SH3 domains span residues 2 to 61 (EPGS…IVTI), 66 to 126 (EGER…ELCL), and 145 to 204 (YSMG…LLGP). A disordered region spans residues 209–242 (DESVNAGSGDDSTLNDEVDVSPEEVESEGDEDDQ). Over residues 221–242 (TLNDEVDVSPEEVESEGDEDDQ) the composition is skewed to acidic residues. One can recognise an SH3 4 domain in the interval 243–302 (QAGTYGIALYRFQALESNELDFEVGDKIRILGTLEDGWLEGRLKGKTGIFPHRFVKLCPS). Disordered regions lie at residues 307-361 (ETMA…EEPL) and 375-437 (GQDE…SRQC). The span at 400–410 (PDLSQEVNGIS) shows a compositional bias: polar residues. S494 is subject to Phosphoserine. 2 disordered regions span residues 519 to 547 (PERPKRRPGLPDKEPATEITPASQGDNLD) and 590 to 681 (RGSS…SEYT). Residues 617 to 626 (TPTSTSPHLL) show a composition bias toward low complexity. Residues 632-651 (KPGPPLVVRPSRPAPLPPPT) show a composition bias toward pro residues. Residues 652 to 662 (QQRLNTASPKP) show a composition bias toward polar residues. Residues 672-681 (APEKEGSEYT) show a composition bias toward basic and acidic residues. The residue at position 684 (S684) is a Phosphoserine. Residues 705-755 (LDMHTRAQEELNLLLEEKQDESLRAETLETLKSYESTIQSLNLELQQLREM) are a coiled coil. One can recognise a DH domain in the interval 784–967 (KRAKVVAELL…KEINANINEY (184 aa)). The region spanning 1008 to 1217 (LKHLTGFAPQ…LKASDREGNL (210 aa)) is the BAR domain. In terms of domain architecture, SH3 5 spans 1285-1348 (PPEKLFHVQR…YSSFLKPYNP (64 aa)). Residues 1353–1375 (SDSSVVSHSSTESEHSGSSPSFH) show a composition bias toward low complexity. 2 disordered regions span residues 1353–1381 (SDSSVVSHSSTESEHSGSSPSFHRQNSSS) and 1415–1510 (ETLG…LGSS). 2 stretches are compositionally biased toward polar residues: residues 1418 to 1428 (GVSSNTGNPET) and 1484 to 1497 (DQGSDSIKGTSRAC). The 64-residue stretch at 1513–1576 (EGNQVYFAIY…PSNYIRKTEY (64 aa)) folds into the SH3 6 domain.

In terms of assembly, binds DNM1 via its N-terminal SH3 domains. The C-terminal SH3 domain binds a complex containing actin, tubulin, Hsp70 and actin-regulatory proteins, such as ENAH, EVL, WIRE, CR16, WAVE1 and NAP1L1. Interacts with FASLG. Interacts (via SH3 domain 6) with WASL. Interacts (via SH3 domain 6) interacts with ENAH. Interacts (via C-terminal domain) with TJP1; required for the apical cell-cell junction localization of DNMBP. Widely expressed.

The protein resides in the cytoplasm. The protein localises to the golgi apparatus. Its subcellular location is the golgi stack. It is found in the cytoskeleton. It localises to the synapse. The protein resides in the cell junction. Functionally, plays a critical role as a guanine nucleotide exchange factor (GEF) for CDC42 in several intracellular processes associated with the actin and microtubule cytoskeleton. Regulates the structure of apical junctions in epithelial cells. Participates in the normal lumenogenesis of epithelial cell cysts by regulating spindle orientation. Plays a role in ciliogenesis. May play a role in membrane trafficking between the cell surface and the Golgi. The chain is Dynamin-binding protein from Rattus norvegicus (Rat).